We begin with the raw amino-acid sequence, 144 residues long: MNLNTLSPDPGSRPSRRRVGRGIGSGLGKTCGKGHKGQKSRAGGYHKINFEGGQMPIQRRLPKMGFKSREGRTIDEVSLGELAKLNDEVIDLVALRKAGLINNSIKDVKVILSGELTAAIKLKGLRVTKGARSAIESLGGSIEE.

Positions Met1–Tyr45 are disordered. Residues Arg21 to Cys31 are compositionally biased toward gly residues.

This sequence belongs to the universal ribosomal protein uL15 family. In terms of assembly, part of the 50S ribosomal subunit.

Binds to the 23S rRNA. The chain is Large ribosomal subunit protein uL15 from Legionella pneumophila (strain Corby).